Consider the following 195-residue polypeptide: Imidazoleglycerol-phosphate dehydratase (195 aa).

Belongs to the imidazoleglycerol-phosphate dehydratase family.

It is found in the cytoplasm. It catalyses the reaction D-erythro-1-(imidazol-4-yl)glycerol 3-phosphate = 3-(imidazol-4-yl)-2-oxopropyl phosphate + H2O. The protein operates within amino-acid biosynthesis; L-histidine biosynthesis; L-histidine from 5-phospho-alpha-D-ribose 1-diphosphate: step 6/9. This chain is Imidazoleglycerol-phosphate dehydratase, found in Shouchella clausii (strain KSM-K16) (Alkalihalobacillus clausii).